Consider the following 437-residue polypeptide: MATAAAASNKFESFFETTLEDADPEIFGAIRNELGRQRHEIELIASENIVSRAVLEAQGSIMTNKYAEGYPGKRYYGGCQFVDVAEELAIERAKKLFGCNFANVQPNSGSQMNQAVFLALLQPGDTFMGLDLNSGGHLTHGSPVNMSGKWFKVVSYGVRKEDHLLDMDAIEKTAHETKPKLILAGGTAYSRIWDWKRFREIADAVGAYLMVDMAHIAGLVAGGVHPSPLPHAHVVTTTTHKSLRGPRGGMILCNDEDIAKKMNSAVFPGLQGGPLMHVIAAKAVAFGEALKPSFKVYAESVAANAKALASSLKETGLDIVSGGTDNHLMLVDLRPKNATGKRAEAALGRANITCNKNGIPFDPEKPFVTSGVRLGTPAGTTRGFGQAEFREIGKLIAEVLDGLKIANSDEGNAAVEAAVKAKVVALTDRFPLYPYLG.

Residues Leu-132 and 136 to 138 (GHL) each bind (6S)-5,6,7,8-tetrahydrofolate. Position 241 is an N6-(pyridoxal phosphate)lysine (Lys-241).

It belongs to the SHMT family. Homodimer. It depends on pyridoxal 5'-phosphate as a cofactor.

The protein localises to the cytoplasm. It catalyses the reaction (6R)-5,10-methylene-5,6,7,8-tetrahydrofolate + glycine + H2O = (6S)-5,6,7,8-tetrahydrofolate + L-serine. It participates in one-carbon metabolism; tetrahydrofolate interconversion. Its pathway is amino-acid biosynthesis; glycine biosynthesis; glycine from L-serine: step 1/1. Functionally, catalyzes the reversible interconversion of serine and glycine with tetrahydrofolate (THF) serving as the one-carbon carrier. This reaction serves as the major source of one-carbon groups required for the biosynthesis of purines, thymidylate, methionine, and other important biomolecules. Also exhibits THF-independent aldolase activity toward beta-hydroxyamino acids, producing glycine and aldehydes, via a retro-aldol mechanism. The sequence is that of Serine hydroxymethyltransferase 1 from Mesorhizobium japonicum (strain LMG 29417 / CECT 9101 / MAFF 303099) (Mesorhizobium loti (strain MAFF 303099)).